The primary structure comprises 410 residues: Sulfate adenylyltransferase (410 aa).

Belongs to the sulfate adenylyltransferase family.

The catalysed reaction is sulfate + ATP + H(+) = adenosine 5'-phosphosulfate + diphosphate. The protein operates within sulfur metabolism; hydrogen sulfide biosynthesis; sulfite from sulfate: step 1/3. The sequence is that of Sulfate adenylyltransferase from Syntrophobacter fumaroxidans (strain DSM 10017 / MPOB).